The chain runs to 522 residues: Lysine--tRNA ligase (522 aa).

A 'HIGH' region motif is present at residues 44-52 (PSGLPHIGT). A 'KMSKS' region motif is present at residues 290-294 (KISKS). An ATP-binding site is contributed by Lys-293.

This sequence belongs to the class-I aminoacyl-tRNA synthetase family.

The protein localises to the cytoplasm. The catalysed reaction is tRNA(Lys) + L-lysine + ATP = L-lysyl-tRNA(Lys) + AMP + diphosphate. The sequence is that of Lysine--tRNA ligase from Rickettsia rickettsii (strain Iowa).